We begin with the raw amino-acid sequence, 235 residues long: MKIVDLAAMEYAEAFALQERLAADVAAGRAEETLLLLEHPPVYTLGRRGDGGSLPDPSVRPVEINRGGDVTWHGPGQLVGYPILDLGCRGRDLHRYLRFLEQVLMDAAASLGVQAWRVAGRTGIWTEGGKLASIGVGVRRWVTMHGFALNICNDLAPFSRIHPCGIVGCPVTTLSREAGRAITVAEAKAAVAAPFAGLPADALPEQPRDAVQPSSCDDVHAPSTTSRRPPCPLTV.

One can recognise a BPL/LPL catalytic domain in the interval 28–203 (GRAEETLLLL…PFAGLPADAL (176 aa)). Substrate-binding positions include 66–73 (RGGDVTWH), 133–135 (SIG), and 146–148 (GFA). The active-site Acyl-thioester intermediate is cysteine 164. The disordered stretch occupies residues 202-235 (ALPEQPRDAVQPSSCDDVHAPSTTSRRPPCPLTV).

It belongs to the LipB family.

The protein resides in the cytoplasm. The catalysed reaction is octanoyl-[ACP] + L-lysyl-[protein] = N(6)-octanoyl-L-lysyl-[protein] + holo-[ACP] + H(+). It functions in the pathway protein modification; protein lipoylation via endogenous pathway; protein N(6)-(lipoyl)lysine from octanoyl-[acyl-carrier-protein]: step 1/2. Catalyzes the transfer of endogenously produced octanoic acid from octanoyl-acyl-carrier-protein onto the lipoyl domains of lipoate-dependent enzymes. Lipoyl-ACP can also act as a substrate although octanoyl-ACP is likely to be the physiological substrate. In Geobacter sulfurreducens (strain ATCC 51573 / DSM 12127 / PCA), this protein is Octanoyltransferase.